Reading from the N-terminus, the 276-residue chain is Large ribosomal subunit protein uL2 (276 aa).

Disordered stretches follow at residues 37-59 (QIQK…GGHK) and 225-276 (VMNP…RHKR). Polar residues predominate over residues 39–49 (QKSGRNNNGHI). The segment covering 50–59 (TTRHKGGGHK) has biased composition (basic residues).

The protein belongs to the universal ribosomal protein uL2 family. As to quaternary structure, part of the 50S ribosomal subunit. Forms a bridge to the 30S subunit in the 70S ribosome.

Functionally, one of the primary rRNA binding proteins. Required for association of the 30S and 50S subunits to form the 70S ribosome, for tRNA binding and peptide bond formation. It has been suggested to have peptidyltransferase activity; this is somewhat controversial. Makes several contacts with the 16S rRNA in the 70S ribosome. In Ralstonia pickettii (strain 12J), this protein is Large ribosomal subunit protein uL2.